The chain runs to 261 residues: Gap junction beta-6 protein (261 aa).

Over 1-22 (MDWGTLHTVIGGVNKHSTSIGK) the chain is Cytoplasmic. A helical transmembrane segment spans residues 23–45 (VWITVIFIFRVMILVVAAQEVWG). The Extracellular segment spans residues 46–75 (DEQEDFVCNTLQPGCKNVCYDHFFPVSHIR). A helical transmembrane segment spans residues 76–98 (LWALQLIFVSTPALLVAMHVAYY). Residues 99-131 (RHETARKFIRGEKRNEFKDLEDIKRQKVRIEGS) lie on the Cytoplasmic side of the membrane. The helical transmembrane segment at 132–154 (LWWTYTSSIFFRIIFEAAFMYVF) threads the bilayer. At 155 to 192 (YFLYNGYHLPWVLKCGIDPCPNLVDCFISRPTEKTVFT) the chain is on the extracellular side. The helical transmembrane segment at 193-215 (VFMISASVICMLLNVAELCYLLL) threads the bilayer. Over 216–261 (KLCFRRSKRTQAQRNHPNHALKESKQNEMNELISDSGQNAITSFPS) the chain is Cytoplasmic.

This sequence belongs to the connexin family. Beta-type (group I) subfamily. In terms of assembly, a connexon is composed of a hexamer of connexins. Interacts with CNST. In terms of tissue distribution, highly expressed in adult brain and skin. Less in uterus, lung and eye. Very low in testis and sciatic nerve. No expression before birth.

It is found in the cell membrane. Its subcellular location is the cell junction. The protein localises to the gap junction. Its function is as follows. One gap junction consists of a cluster of closely packed pairs of transmembrane channels, the connexons, through which materials of low MW diffuse from one cell to a neighboring cell. The protein is Gap junction beta-6 protein (Gjb6) of Mus musculus (Mouse).